The chain runs to 353 residues: Interferon-stimulated 20 kDa exonuclease-like 2 (353 aa).

Disordered regions lie at residues 1–93 (MSTL…QPLD) and 125–172 (ALPK…SGAS). Residues 14–23 (PPKKALEGNA) show a composition bias toward basic and acidic residues. Over residues 24–35 (KHRNFVKKRRLL) the composition is skewed to basic residues. A compositionally biased stretch (basic and acidic residues) spans 54 to 63 (LHSEPSKKGE). Residues 135–151 (RSQKKSSQKKSSKKNHP) show a composition bias toward basic residues. A compositionally biased stretch (polar residues) spans 152-172 (QKNAPQNSTQAHSENKCSGAS). The 176-residue stretch at 178 to 353 (KMVAIDCEMV…EHLARNPPTD (176 aa)) folds into the Exonuclease domain.

It localises to the nucleus. The protein resides in the nucleolus. Functionally, 3'-&gt; 5'-exoribonuclease involved in ribosome biogenesis in the processing of the 12S pre-rRNA. Displays a strong specificity for a 3'-end containing a free hydroxyl group. The polypeptide is Interferon-stimulated 20 kDa exonuclease-like 2 (ISG20L2) (Homo sapiens (Human)).